A 125-amino-acid polypeptide reads, in one-letter code: RxLR effector protein Avh6 (125 aa).

The first 25 residues, 1–25 (MRLSSTTFVVLAAVLLASGTAVSKA), serve as a signal peptide directing secretion. The RxLR-dEER signature appears at 48–70 (RFLRSHHTEDGEAKLSNYDNEER).

This sequence belongs to the RxLR effector family.

It is found in the secreted. Its subcellular location is the host cell. Its function is as follows. Effector that suppresses plant defense responses during the early stages of pathogen infection. Suppresses cell death induced by effectors and PAMPs in plant hosts. Triggers a hypersensitive response (HR) in the presence of Rps1d. Suppresses BAX-induced cell death and enhan,ced P.capsici infection in Nicotiana benthamiana. Also suppresses effector-triggered immunity induction by associating with Avr1b and Rps1b, suggesting a role in suppressing plant immunity. The protein is RxLR effector protein Avh6 of Phytophthora sojae (strain P6497) (Soybean stem and root rot agent).